The chain runs to 90 residues: MIYLKNKEDVIRMEGTIVEALPNAMFRVQLDNGFKVLAHVSGKMRKNFIRLVPGDRVVVELTIYDLTRGRIVYRKKLDSKGEEEILDDDE.

One can recognise an S1-like domain in the interval 7–76; sequence KEDVIRMEGT…TRGRIVYRKK (70 aa).

The protein belongs to the IF-1 family. Component of the 30S ribosomal translation pre-initiation complex which assembles on the 30S ribosome in the order IF-2 and IF-3, IF-1 and N-formylmethionyl-tRNA(fMet); mRNA recruitment can occur at any time during PIC assembly.

It is found in the cytoplasm. One of the essential components for the initiation of protein synthesis. Stabilizes the binding of IF-2 and IF-3 on the 30S subunit to which N-formylmethionyl-tRNA(fMet) subsequently binds. Helps modulate mRNA selection, yielding the 30S pre-initiation complex (PIC). Upon addition of the 50S ribosomal subunit IF-1, IF-2 and IF-3 are released leaving the mature 70S translation initiation complex. This chain is Translation initiation factor IF-1, found in Fervidobacterium nodosum (strain ATCC 35602 / DSM 5306 / Rt17-B1).